Reading from the N-terminus, the 385-residue chain is Neuropeptide Y receptor type 2 (385 aa).

Topologically, residues 1 to 54 (MGPLEAIGEENQTDEMKMELFTKLYLPRYTTPVSELALDPKPELKDSTTLVEVQ) are extracellular. Asn11 is a glycosylation site (N-linked (GlcNAc...) asparagine). The chain crosses the membrane as a helical span at residues 55–75 (IILIFAYCSIILLGVIGNSLV). Topologically, residues 76–90 (IHVIIKFKSMRTVTN) are cytoplasmic. A helical transmembrane segment spans residues 91–111 (FFIANLAVADLLVNTLCLPFT). Residues 112-128 (LVYTLLGEWKLGPVLCH) lie on the Extracellular side of the membrane. Cys127 and Cys207 form a disulfide bridge. Residues 129–149 (LVPYAQALAVHVSTVTLTVIA) traverse the membrane as a helical segment. The Cytoplasmic portion of the chain corresponds to 150–169 (LDRHRCIVYHLESKISKRIS). The helical transmembrane segment at 170-190 (FLIIGVAWAVSALLASPLAIF) threads the bilayer. At 191–221 (REYSLIEIIPDFKIVVCSEKWPGEGQLNYGT) the chain is on the extracellular side. A helical membrane pass occupies residues 222–242 (IYSVSMLLIQYVLPLAIISYA). The Cytoplasmic segment spans residues 243–273 (YTRIWTKLKNHVSPGAGNDHYHHRRQKTTKM). A helical membrane pass occupies residues 274–294 (LVCVVVVFAVSWLPFHAFQLV). The Extracellular segment spans residues 295–308 (SDIDSQVLDLKEYK). Residues 309–329 (LIYTVFHVIAMCSTFANPLLY) form a helical membrane-spanning segment. Topologically, residues 330 to 385 (GWMNNNYRTAFLTAFQCEQRLDSIHPEVSAAFKARKKLEAKKSQFPGDSFTQPTNV) are cytoplasmic. The S-palmitoyl cysteine moiety is linked to residue Cys346.

It belongs to the G-protein coupled receptor 1 family.

It localises to the cell membrane. Its function is as follows. Receptor for neuropeptide Y and peptide YY. This chain is Neuropeptide Y receptor type 2 (NPY2R), found in Gallus gallus (Chicken).